The chain runs to 267 residues: Kit ligand (267 aa).

The signal sequence occupies residues 1-25 (MKKTQTWIITCIYLQLLLFNPLVHT). Glutamine 26 is modified (pyrrolidone carboxylic acid). The Extracellular portion of the chain corresponds to 26–215 (QGICRNRVTD…SNSIEDSSLQ (190 aa)). Disulfide bonds link cysteine 29/cysteine 114 and cysteine 68/cysteine 164. 4 N-linked (GlcNAc...) asparagine glycosylation sites follow: asparagine 90, asparagine 97, asparagine 145, and asparagine 196. Residues 216-238 (WAAVALPAFFSLVIGFAFGALYW) traverse the membrane as a helical segment. The Cytoplasmic portion of the chain corresponds to 239 to 267 (KKKQPNLTRTVENRQINEEDNEISMLQEK).

This sequence belongs to the SCF family. As to quaternary structure, homodimer, non-covalently linked. Heterotetramer with KIT, binding two KIT molecules; thereby mediates KIT dimerization and subsequent activation by autophosphorylation. Post-translationally, a soluble form is produced by proteolytic processing of the extracellular domain.

The protein localises to the cytoplasm. Its subcellular location is the cytoskeleton. The protein resides in the cell membrane. It is found in the cell projection. It localises to the lamellipodium. The protein localises to the filopodium. Its subcellular location is the secreted. Functionally, ligand for the receptor-type protein-tyrosine kinase KIT. Plays an essential role in the regulation of cell survival and proliferation, hematopoiesis, stem cell maintenance, gametogenesis, mast cell development, migration and function, and in melanogenesis. KITLG/SCF binding can activate several signaling pathways. Promotes phosphorylation of PIK3R1, the regulatory subunit of phosphatidylinositol 3-kinase, and subsequent activation of the kinase AKT1. KITLG/SCF and KIT also transmit signals via GRB2 and activation of RAS, RAF1 and the MAP kinases MAPK1/ERK2 and/or MAPK3/ERK1. KITLG/SCF and KIT promote activation of STAT family members STAT1, STAT3 and STAT5. KITLG/SCF and KIT promote activation of PLCG1, leading to the production of the cellular signaling molecules diacylglycerol and inositol 1,4,5-trisphosphate. KITLG/SCF acts synergistically with other cytokines, probably interleukins. The protein is Kit ligand (KITLG) of Ovis aries (Sheep).